The following is a 251-amino-acid chain: Aliphatic sulfonates import ATP-binding protein SsuB (251 aa).

In terms of domain architecture, ABC transporter spans 3 to 231 (VSINEVSKYF…PRSKNSESFQ (229 aa)). 39–46 (GPSGCGKS) provides a ligand contact to ATP.

The protein belongs to the ABC transporter superfamily. Aliphatic sulfonates importer (TC 3.A.1.17.2) family. The complex is composed of two ATP-binding proteins (SsuB), two transmembrane proteins (SsuC) and a solute-binding protein (SsuA).

It is found in the cell membrane. It carries out the reaction ATP + H2O + aliphatic sulfonate-[sulfonate-binding protein]Side 1 = ADP + phosphate + aliphatic sulfonateSide 2 + [sulfonate-binding protein]Side 1.. In terms of biological role, part of the ABC transporter complex SsuABC involved in aliphatic sulfonates import. Responsible for energy coupling to the transport system. This Bacillus cereus (strain ZK / E33L) protein is Aliphatic sulfonates import ATP-binding protein SsuB.